The following is a 79-amino-acid chain: U-actitoxin-Avd8a (79 aa).

Residues 1 to 19 form the signal peptide; that stretch reads MKSLVIVFVVLLGVAMISA. The propeptide occupies 20–36; sequence NEEELLAILQDQRNDAR.

The protein belongs to the sea anemone 8 toxin family.

The protein resides in the secreted. The protein localises to the nematocyst. This chain is U-actitoxin-Avd8a, found in Anemonia viridis (Snakelocks anemone).